The chain runs to 158 residues: F(420)H(2) dehydrogenase subunit C (158 aa).

It belongs to the complex I 30 kDa subunit family. The FPO complex is composed of at least 13 different subunits.

It localises to the cell membrane. It carries out the reaction methanophenazine + reduced coenzyme F420-(gamma-L-Glu)(n) = dihydromethanophenazine + oxidized coenzyme F420-(gamma-L-Glu)(n) + H(+). In terms of biological role, component of the F(420)H(2) dehydrogenase (FPO complex) which is part of the energy-conserving F(420)H(2):heterodisulfide oxidoreductase system. The membrane-bound electron transfer system of the complex plays an important role in the metabolism of methylotrophic methanogens when the organisms grow on methanol or methylamines. Catalyzes the oxidation of methanophenazine to dihydromethanophenazine. It shuttles electrons from F(420)H(2), via FAD and iron-sulfur (Fe-S) centers, to methanophenazine (an electron carrier in the membrane). It couples the redox reaction to proton translocation (for every two electrons transferred, two hydrogen ions are translocated across the cytoplasmic membrane), and thus conserves the redox energy in a proton gradient. It also catalyzes the oxidation of F(420)H(2) with quinones such as 2,3-dimethyl-1,4-naphthoquinone, 2-methyl-1,4-naphthoquinone and tetramethyl-p-benzoquinone. This is F(420)H(2) dehydrogenase subunit C (fpoC) from Methanosarcina mazei (strain ATCC BAA-159 / DSM 3647 / Goe1 / Go1 / JCM 11833 / OCM 88) (Methanosarcina frisia).